The primary structure comprises 625 residues: 1-deoxy-D-xylulose-5-phosphate synthase (625 aa).

Thiamine diphosphate-binding positions include H80 and 121 to 123; that span reads GHS. D152 serves as a coordination point for Mg(2+). Residues 153–154, N181, Y288, and E370 contribute to the thiamine diphosphate site; that span reads GA. N181 is a binding site for Mg(2+).

Belongs to the transketolase family. DXPS subfamily. Homodimer. It depends on Mg(2+) as a cofactor. The cofactor is thiamine diphosphate.

The enzyme catalyses D-glyceraldehyde 3-phosphate + pyruvate + H(+) = 1-deoxy-D-xylulose 5-phosphate + CO2. It functions in the pathway metabolic intermediate biosynthesis; 1-deoxy-D-xylulose 5-phosphate biosynthesis; 1-deoxy-D-xylulose 5-phosphate from D-glyceraldehyde 3-phosphate and pyruvate: step 1/1. Functionally, catalyzes the acyloin condensation reaction between C atoms 2 and 3 of pyruvate and glyceraldehyde 3-phosphate to yield 1-deoxy-D-xylulose-5-phosphate (DXP). This chain is 1-deoxy-D-xylulose-5-phosphate synthase, found in Alteromonas mediterranea (strain DSM 17117 / CIP 110805 / LMG 28347 / Deep ecotype).